Here is a 388-residue protein sequence, read N- to C-terminus: 3-sulfinopropanoyl-CoA desulfinase (388 aa).

FAD-binding positions include 121-124 (ICIT), serine 130, and 153-156 (HWIT). Position 240-241 (240-241 (YN)) interacts with substrate. FAD is bound by residues arginine 269, glutamine 336, 363-367 (GGTAQ), and glutamine 384.

It belongs to the acyl-CoA dehydrogenase family. As to quaternary structure, homotrimer or homotetramer. Requires FAD as cofactor.

It catalyses the reaction 3-sulfinopropanoyl-CoA + H2O = propanoyl-CoA + sulfite + H(+). Its function is as follows. Catalyzes the conversion 3-sulfinopropanoyl-CoA (3SP-CoA) to propanoyl-CoA by abstraction of sulfite. Does not show dehydrogenase activity. In Paraburkholderia xenovorans (strain LB400), this protein is 3-sulfinopropanoyl-CoA desulfinase.